Consider the following 347-residue polypeptide: NADH-ubiquinone oxidoreductase chain 2 (347 aa).

11 helical membrane passes run 3–23 (PPIL…VLTS), 25–45 (HWLT…PILM), 59–79 (YLLT…IDLL), 96–116 (AMMT…FWVP), 122–142 (IHMS…LSIL), 149–169 (INPN…GWGG), 178–198 (ILAY…LYNP), 200–220 (MMIL…MLFM), 237–257 (APLI…LPPL), 274–294 (EMII…YFYM), and 325–345 (LLSP…LLSI).

This sequence belongs to the complex I subunit 2 family. Core subunit of respiratory chain NADH dehydrogenase (Complex I) which is composed of 45 different subunits. Interacts with TMEM242.

Its subcellular location is the mitochondrion inner membrane. The enzyme catalyses a ubiquinone + NADH + 5 H(+)(in) = a ubiquinol + NAD(+) + 4 H(+)(out). Functionally, core subunit of the mitochondrial membrane respiratory chain NADH dehydrogenase (Complex I) which catalyzes electron transfer from NADH through the respiratory chain, using ubiquinone as an electron acceptor. Essential for the catalytic activity and assembly of complex I. The sequence is that of NADH-ubiquinone oxidoreductase chain 2 from Cynictis penicillata (Yellow mongoose).